The sequence spans 331 residues: Terpene synthase 8 (331 aa).

Positions 97 to 102 (DDFYLE) match the DDxx(x)D/E motif motif. The NDxxSxxxD/E motif signature appears at 228 to 236 (NDIYSFNKE).

The protein belongs to the terpene synthase family.

Its function is as follows. Terpene synthase that converts its substrate farnesyl diphosphate (FPP) into several yet unidentified sesquiterpenes. In Dictyostelium purpureum (Slime mold), this protein is Terpene synthase 8.